A 247-amino-acid chain; its full sequence is MNFVISQHFNEIKYRFLYIFFTFLLCFIICTIYSESIMFFYVHPLINLTSMQGKHLIFTEMSEAFHTYIFLCFFTSIYCTFPYFFYQFWAFFIPSTYQFERLQLRFLSFFFFTLLFFSCIIIYFIILPEIWSFFLHFEKKSYYFNLQLEARISSYIQFTFQIFSYFFVLFQCPLFTHFSLNLNLLTISFLVNSRKYIYFLFLILAAFLSPPDILSQFFLFSLIVFMYELCVFYSCFYDSLRERIKTF.

6 consecutive transmembrane segments (helical) span residues 19 to 39 (IFFT…SIMF), 73 to 93 (FFTS…AFFI), 106 to 126 (FLSF…YFII), 155 to 175 (YIQF…CPLF), 196 to 216 (YIYF…ILSQ), and 217 to 237 (FFLF…SCFY).

Belongs to the TatC family.

Its subcellular location is the mitochondrion membrane. This is an uncharacterized protein from Nephroselmis olivacea (Green alga).